A 479-amino-acid polypeptide reads, in one-letter code: Flap endonuclease 1 (479 aa).

The interval 1 to 106 is N-domain; the sequence is MGIKGLTKFI…SELEKRGEKR (106 aa). D34 contacts Mg(2+). The DNA site is built by R47 and R72. Residues D88, E160, E162, D181, and D183 each coordinate Mg(2+). Residues 124-266 are I-domain; it reads EIKKQSGRTV…KTAYNLIKEY (143 aa). E160 is a DNA binding site. DNA contacts are provided by G244 and D246. A Mg(2+)-binding site is contributed by D246. Positions 349-357 are interaction with PCNA; sequence TQRRLDTFF. Residues 379–455 form a disordered region; the sequence is AKGKGKKREL…NSDSGNIKNE (77 aa). The segment covering 403–428 has biased composition (basic and acidic residues); the sequence is NIKDEKKNTDKMDELKNKSDENFVKD.

The protein belongs to the XPG/RAD2 endonuclease family. FEN1 subfamily. As to quaternary structure, interacts with PCNA. Three molecules of FEN1 bind to one PCNA trimer with each molecule binding to one PCNA monomer. PCNA stimulates the nuclease activity without altering cleavage specificity. Mg(2+) is required as a cofactor. Post-translationally, phosphorylated. Phosphorylation upon DNA damage induces relocalization to the nuclear plasma.

It localises to the nucleus. The protein localises to the nucleolus. The protein resides in the nucleoplasm. It is found in the mitochondrion. Functionally, structure-specific nuclease with 5'-flap endonuclease and 5'-3' exonuclease activities involved in DNA replication and repair. During DNA replication, cleaves the 5'-overhanging flap structure that is generated by displacement synthesis when DNA polymerase encounters the 5'-end of a downstream Okazaki fragment. It enters the flap from the 5'-end and then tracks to cleave the flap base, leaving a nick for ligation. Also involved in the long patch base excision repair (LP-BER) pathway, by cleaving within the apurinic/apyrimidinic (AP) site-terminated flap. Acts as a genome stabilization factor that prevents flaps from equilibrating into structures that lead to duplications and deletions. Also possesses 5'-3' exonuclease activity on nicked or gapped double-stranded DNA, and exhibits RNase H activity. Also involved in replication and repair of rDNA and in repairing mitochondrial DNA. This is Flap endonuclease 1 from Plasmodium chabaudi chabaudi.